The following is a 240-amino-acid chain: Ubiquinone biosynthesis O-methyltransferase (240 aa).

R44, G64, D85, and M129 together coordinate S-adenosyl-L-methionine.

It belongs to the methyltransferase superfamily. UbiG/COQ3 family.

It catalyses the reaction a 3-demethylubiquinol + S-adenosyl-L-methionine = a ubiquinol + S-adenosyl-L-homocysteine + H(+). The catalysed reaction is a 3-(all-trans-polyprenyl)benzene-1,2-diol + S-adenosyl-L-methionine = a 2-methoxy-6-(all-trans-polyprenyl)phenol + S-adenosyl-L-homocysteine + H(+). Its pathway is cofactor biosynthesis; ubiquinone biosynthesis. In terms of biological role, O-methyltransferase that catalyzes the 2 O-methylation steps in the ubiquinone biosynthetic pathway. This chain is Ubiquinone biosynthesis O-methyltransferase, found in Escherichia coli O157:H7.